Here is a 242-residue protein sequence, read N- to C-terminus: Uridylate kinase (242 aa).

An ATP-binding site is contributed by 17 to 20 (KLSG). UMP is bound at residue glycine 59. Residues glycine 60 and arginine 64 each contribute to the ATP site. UMP-binding positions include aspartate 79 and 140–147 (TGNPFFTT). 3 residues coordinate ATP: threonine 167, tyrosine 173, and aspartate 176.

Belongs to the UMP kinase family. In terms of assembly, homohexamer.

Its subcellular location is the cytoplasm. The catalysed reaction is UMP + ATP = UDP + ADP. The protein operates within pyrimidine metabolism; CTP biosynthesis via de novo pathway; UDP from UMP (UMPK route): step 1/1. Inhibited by UTP. Catalyzes the reversible phosphorylation of UMP to UDP. The protein is Uridylate kinase of Marinobacter nauticus (strain ATCC 700491 / DSM 11845 / VT8) (Marinobacter aquaeolei).